The chain runs to 150 residues: Endoribonuclease YbeY (150 aa).

Positions 102, 106, and 112 each coordinate Zn(2+).

This sequence belongs to the endoribonuclease YbeY family. The cofactor is Zn(2+).

It localises to the cytoplasm. Its function is as follows. Single strand-specific metallo-endoribonuclease involved in late-stage 70S ribosome quality control and in maturation of the 3' terminus of the 16S rRNA. The sequence is that of Endoribonuclease YbeY from Thermotoga petrophila (strain ATCC BAA-488 / DSM 13995 / JCM 10881 / RKU-1).